The chain runs to 467 residues: ATP synthase subunit beta (467 aa).

Residue 150–157 participates in ATP binding; it reads GGAGVGKT.

It belongs to the ATPase alpha/beta chains family. In terms of assembly, F-type ATPases have 2 components, CF(1) - the catalytic core - and CF(0) - the membrane proton channel. CF(1) has five subunits: alpha(3), beta(3), gamma(1), delta(1), epsilon(1). CF(0) has three main subunits: a(1), b(2) and c(9-12). The alpha and beta chains form an alternating ring which encloses part of the gamma chain. CF(1) is attached to CF(0) by a central stalk formed by the gamma and epsilon chains, while a peripheral stalk is formed by the delta and b chains.

The protein resides in the cell inner membrane. It catalyses the reaction ATP + H2O + 4 H(+)(in) = ADP + phosphate + 5 H(+)(out). Its function is as follows. Produces ATP from ADP in the presence of a proton gradient across the membrane. The catalytic sites are hosted primarily by the beta subunits. This is ATP synthase subunit beta from Vibrio alginolyticus.